The chain runs to 318 residues: Acetyl-coenzyme A carboxylase carboxyl transferase subunit beta (318 aa).

Residues 25 to 294 form the CoA carboxyltransferase N-terminal domain; that stretch reads LWSKCSECGT…AVKGELPAPA (270 aa). C29, C32, C48, and C51 together coordinate Zn(2+). Residues 29–51 form a C4-type zinc finger; it reads CSECGTMLFHRELSDNLNVCTNC. The tract at residues 286–318 is disordered; the sequence is VKGELPAPAPLESDAETALASDTDPNGAPPSKD.

It belongs to the AccD/PCCB family. As to quaternary structure, acetyl-CoA carboxylase is a heterohexamer composed of biotin carboxyl carrier protein (AccB), biotin carboxylase (AccC) and two subunits each of ACCase subunit alpha (AccA) and ACCase subunit beta (AccD). It depends on Zn(2+) as a cofactor.

Its subcellular location is the cytoplasm. It carries out the reaction N(6)-carboxybiotinyl-L-lysyl-[protein] + acetyl-CoA = N(6)-biotinyl-L-lysyl-[protein] + malonyl-CoA. It participates in lipid metabolism; malonyl-CoA biosynthesis; malonyl-CoA from acetyl-CoA: step 1/1. In terms of biological role, component of the acetyl coenzyme A carboxylase (ACC) complex. Biotin carboxylase (BC) catalyzes the carboxylation of biotin on its carrier protein (BCCP) and then the CO(2) group is transferred by the transcarboxylase to acetyl-CoA to form malonyl-CoA. This Jannaschia sp. (strain CCS1) protein is Acetyl-coenzyme A carboxylase carboxyl transferase subunit beta.